The sequence spans 87 residues: Acyl carrier protein TtuC (87 aa).

Residues 11-87 (ITAEDVQQWL…HALSQFIAAK (77 aa)) form the Carrier domain. The residue at position 48 (Ser48) is an O-(pantetheine 4'-phosphoryl)serine.

The cofactor is pantetheine 4'-phosphate.

Its function is as follows. Carrier protein likely involved in the biosynthesis of a polyyne metabolite. Accepts as substrate the activated form of decanoic acid from TtuA. The sequence is that of Acyl carrier protein TtuC from Teredinibacter turnerae (strain ATCC 39867 / T7901).